Consider the following 632-residue polypeptide: Mitoguardin 1 (632 aa).

Residues 70-90 (PVAKKLFVVTAVSAISVIFLA) form a helical membrane-spanning segment. Residues Ser289 and Ser293 each carry the phosphoserine modification.

It belongs to the mitoguardin family. As to quaternary structure, homodimer and heterodimer; forms heterodimers with MIGA2. Interacts with PLD6/MitoPLD.

The protein resides in the mitochondrion outer membrane. Regulator of mitochondrial fusion: acts by forming homo- and heterodimers at the mitochondrial outer membrane and facilitating the formation of PLD6/MitoPLD dimers. May act by regulating phospholipid metabolism via PLD6/MitoPLD. In Homo sapiens (Human), this protein is Mitoguardin 1.